A 111-amino-acid polypeptide reads, in one-letter code: SRA stem-loop-interacting RNA-binding protein, mitochondrial (111 aa).

The region spanning 19 to 96 is the RRM domain; the sequence is PVAFVRKIPW…VKLHVQPQRP (78 aa). The tract at residues 92 to 111 is disordered; it reads QPQRPKALQGDQTSDEEKDF. Threonine 104 carries the phosphothreonine modification. Residue serine 105 is modified to Phosphoserine.

The protein localises to the mitochondrion. The protein resides in the nucleus. Functionally, RNA-binding protein that acts as a nuclear receptor corepressor. Probably acts by binding the SRA RNA, and repressing the SRA-mediated nuclear receptor coactivation. Binds the STR7 loop of SRA RNA. Also able to repress glucocorticoid (GR), androgen (AR), thyroid (TR) and VDR-mediated transactivation. The protein is SRA stem-loop-interacting RNA-binding protein, mitochondrial (SLIRP) of Bos taurus (Bovine).